The sequence spans 351 residues: Methionine import ATP-binding protein MetN (351 aa).

The 240-residue stretch at 2–241 folds into the ABC transporter domain; sequence IVTEALTKAF…PQHAVTRAFV (240 aa). Residue 38 to 45 coordinates ATP; the sequence is GRSGAGKS.

Belongs to the ABC transporter superfamily. Methionine importer (TC 3.A.1.24) family. The complex is composed of two ATP-binding proteins (MetN), two transmembrane proteins (MetI) and a solute-binding protein (MetQ).

The protein localises to the cell inner membrane. It catalyses the reaction L-methionine(out) + ATP + H2O = L-methionine(in) + ADP + phosphate + H(+). The enzyme catalyses D-methionine(out) + ATP + H2O = D-methionine(in) + ADP + phosphate + H(+). In terms of biological role, part of the ABC transporter complex MetNIQ involved in methionine import. Responsible for energy coupling to the transport system. The polypeptide is Methionine import ATP-binding protein MetN (Rhodospirillum rubrum (strain ATCC 11170 / ATH 1.1.1 / DSM 467 / LMG 4362 / NCIMB 8255 / S1)).